Consider the following 141-residue polypeptide: Prefoldin subunit alpha (141 aa).

Belongs to the prefoldin subunit alpha family. As to quaternary structure, heterohexamer of two alpha and four beta subunits.

It is found in the cytoplasm. Functionally, molecular chaperone capable of stabilizing a range of proteins. Seems to fulfill an ATP-independent, HSP70-like function in archaeal de novo protein folding. In Methanothermobacter thermautotrophicus (strain ATCC 29096 / DSM 1053 / JCM 10044 / NBRC 100330 / Delta H) (Methanobacterium thermoautotrophicum), this protein is Prefoldin subunit alpha (pfdA).